We begin with the raw amino-acid sequence, 423 residues long: Amino sugar nitrososynthase RubN8 (423 aa).

Belongs to the acyl-CoA dehydrogenase family. FAD is required as a cofactor.

It participates in antibiotic biosynthesis. Nitrososynthase involved in the biosynthesis of rubradirin, an ansamycin antibiotic. In vitro, catalyzes the double-oxidation of TDP-L-epi-vancosamine to TDP-L-epi-vancosonitrose. In vivo, probably catalyzes the formation of D-rubranitrose, the nitro sugar moiety of rubradirin. This is Amino sugar nitrososynthase RubN8 from Streptomyces rubradiris (Streptomyces achromogenes subsp. rubradiris).